The chain runs to 1073 residues: Semaphorin-6D (1073 aa).

The signal sequence occupies residues M1–A20. Residues V21–N662 lie on the Extracellular side of the membrane. The 486-residue stretch at D27 to L512 folds into the Sema domain. Residue N51 is glycosylated (N-linked (GlcNAc...) asparagine). 4 disulfide bridges follow: C108-C118, C136-C145, C259-C370, and C284-C329. An N-linked (GlcNAc...) asparagine glycan is attached at N283. Residues N435 and N461 are each glycosylated (N-linked (GlcNAc...) asparagine). Cystine bridges form between C477–C506, C515–C533, C521–C568, and C525–C541. A PSI domain is found at R514 to H569. N-linked (GlcNAc...) asparagine glycosylation is present at N631. The helical transmembrane segment at V663–V683 threads the bilayer. Topologically, residues Y684–Y1073 are cytoplasmic. A phosphoserine mark is found at S723, S734, and S744. Disordered regions lie at residues S744–E775, A787–P825, T839–D874, S914–T1005, and L1021–Y1073. A Phosphothreonine modification is found at T773. Positions S790–T805 are enriched in basic and acidic residues. Phosphoserine is present on residues S931, S957, and S983. Residues S931 to T942 show a composition bias toward polar residues. Composition is skewed to polar residues over residues N980–M995 and L1021–L1037.

This sequence belongs to the semaphorin family.

The protein localises to the cell membrane. Its subcellular location is the cytoplasm. Its function is as follows. Shows growth cone collapsing activity on dorsal root ganglion (DRG) neurons in vitro. May be a stop signal for the DRG neurons in their target areas, and possibly also for other neurons. May also be involved in the maintenance and remodeling of neuronal connections. Ligand of TREM2 with PLXNA1 as coreceptor in dendritic cells, plays a role in the generation of immune responses and skeletal homeostasis. The polypeptide is Semaphorin-6D (Homo sapiens (Human)).